We begin with the raw amino-acid sequence, 552 residues long: Phosphoglucomutase (552 aa).

Ser135 serves as the catalytic Phosphoserine intermediate. The Mg(2+) site is built by Ser135, Asp289, Asp291, and Asp293.

Belongs to the phosphohexose mutase family. It depends on Mg(2+) as a cofactor.

The catalysed reaction is alpha-D-glucose 1-phosphate = alpha-D-glucose 6-phosphate. The protein operates within glycolipid metabolism; diglucosyl-diacylglycerol biosynthesis. In terms of biological role, catalyzes the interconversion between glucose-6-phosphate and alpha-glucose-1-phosphate. This is the first step in the biosynthesis of diglucosyl-diacylglycerol (Glc2-DAG), i.e. a glycolipid found in the membrane, which is also used as a membrane anchor for lipoteichoic acid (LTA). The chain is Phosphoglucomutase (pgcA) from Staphylococcus saprophyticus subsp. saprophyticus (strain ATCC 15305 / DSM 20229 / NCIMB 8711 / NCTC 7292 / S-41).